Reading from the N-terminus, the 83-residue chain is Small ribosomal subunit protein bS16 (83 aa).

Belongs to the bacterial ribosomal protein bS16 family.

This chain is Small ribosomal subunit protein bS16, found in Azotobacter vinelandii (strain DJ / ATCC BAA-1303).